The chain runs to 297 residues: Mitochondrial ornithine transporter 1 (297 aa).

Solcar repeat units lie at residues 15–97 (GSPA…LKLT), 102–205 (DPTL…FKKN), and 212–292 (KPHF…FRET). The next 6 helical transmembrane spans lie at 18 to 38 (ASTF…GYPL), 72 to 91 (GLTL…FTVY), 107 to 127 (YFIS…PFEY), 184 to 204 (HLTR…TFKK), 215 to 235 (FAYA…VFPV), and 264 to 285 (IYRG…NFTL).

The protein belongs to the mitochondrial carrier (TC 2.A.29) family.

The protein localises to the mitochondrion inner membrane. Functionally, required for arginine biosynthesis. Transports ornithine synthesized from glutamate in the mitochondrial matrix to the cytosol, where it is converted to arginine. This chain is Mitochondrial ornithine transporter 1, found in Schizosaccharomyces pombe (strain 972 / ATCC 24843) (Fission yeast).